We begin with the raw amino-acid sequence, 776 residues long: 5-methyltetrahydropteroyltriglutamate--homocysteine methyltransferase (776 aa).

5-methyltetrahydropteroyltri-L-glutamate is bound by residues 16-19 (RELK) and Lys112. L-homocysteine contacts are provided by residues 432–434 (IGS) and Glu485. L-methionine contacts are provided by residues 432-434 (IGS) and Glu485. 5-methyltetrahydropteroyltri-L-glutamate contacts are provided by residues 516–517 (RC) and Trp562. L-homocysteine is bound at residue Asp600. Asp600 contacts L-methionine. Residue Glu606 participates in 5-methyltetrahydropteroyltri-L-glutamate binding. Zn(2+)-binding residues include His642, Cys644, and Glu666. His695 (proton donor) is an active-site residue. Cys727 contacts Zn(2+). A disordered region spans residues 755 to 776 (HAGAVHAGTPATRAEHAESALA). The segment covering 767–776 (RAEHAESALA) has biased composition (basic and acidic residues).

This sequence belongs to the vitamin-B12 independent methionine synthase family. Zn(2+) serves as cofactor.

The catalysed reaction is 5-methyltetrahydropteroyltri-L-glutamate + L-homocysteine = tetrahydropteroyltri-L-glutamate + L-methionine. It functions in the pathway amino-acid biosynthesis; L-methionine biosynthesis via de novo pathway; L-methionine from L-homocysteine (MetE route): step 1/1. In terms of biological role, catalyzes the transfer of a methyl group from 5-methyltetrahydrofolate to homocysteine resulting in methionine formation. This chain is 5-methyltetrahydropteroyltriglutamate--homocysteine methyltransferase, found in Ralstonia nicotianae (strain ATCC BAA-1114 / GMI1000) (Ralstonia solanacearum).